The primary structure comprises 426 residues: MRRTVLLVTVLLVFIGGCLGQMENPRPTNNPSTSHPSDSYSTLPTTKYDVLKEGQEKPVVNAINSFTFDLYKELAGNNNNVFFSPFSIETALAMAYEGARGKTAEEMKRVLHLPEDDDARWTGFRYLLLSLKSPEGSPFILRSVNALWVQRGYSLREEYLGIVKEFYLGEAKEVDFQGNPAEAAREINEWVEEQTNGRIKDIVSGLSPLTRLVITNAVYFKANWSSRFRASDTRNETFHAPNGTVIVPMMHQTGEFPYFENDDLQALELPYEGERLGMLIILPKEGKFEKVEGNLSAGSIENILKNMREEKVKVALPKFRFEASYKLRDVLMDMGMKRAFLVPDFSGISNGENLAIEDVVHKSFISVAENGTEAAAATAVTLTMNAPMQEKEPKIFKADHPFIFFIYDRETGTILFMGRMMNPKDG.

Residues 23–42 form a disordered region; sequence ENPRPTNNPSTSHPSDSYST. Over residues 26–42 the composition is skewed to polar residues; that stretch reads RPTNNPSTSHPSDSYST.

Belongs to the serpin family.

This is an uncharacterized protein from Thermococcus kodakarensis (strain ATCC BAA-918 / JCM 12380 / KOD1) (Pyrococcus kodakaraensis (strain KOD1)).